We begin with the raw amino-acid sequence, 605 residues long: Elongation factor 4 (605 aa).

Residues 11–193 (KCIRNFSIIA…QIVTRISPPQ (183 aa)) enclose the tr-type G domain. GTP contacts are provided by residues 23 to 28 (DHGKST) and 140 to 143 (NKVD).

The protein belongs to the TRAFAC class translation factor GTPase superfamily. Classic translation factor GTPase family. LepA subfamily.

It localises to the cell membrane. It catalyses the reaction GTP + H2O = GDP + phosphate + H(+). Functionally, required for accurate and efficient protein synthesis under certain stress conditions. May act as a fidelity factor of the translation reaction, by catalyzing a one-codon backward translocation of tRNAs on improperly translocated ribosomes. Back-translocation proceeds from a post-translocation (POST) complex to a pre-translocation (PRE) complex, thus giving elongation factor G a second chance to translocate the tRNAs correctly. Binds to ribosomes in a GTP-dependent manner. The protein is Elongation factor 4 of Aster yellows witches'-broom phytoplasma (strain AYWB).